The chain runs to 508 residues: Purine-cytosine permease fcyB (508 aa).

At Met1–Asn72 the chain is on the cytoplasmic side. Residues Ile73–Gly93 form a helical membrane-spanning segment. At Lys94–Ala104 the chain is on the extracellular side. A helical transmembrane segment spans residues Ile105–Phe125. At Gly126–Gly147 the chain is on the cytoplasmic side. A helical transmembrane segment spans residues Phe148–Ala168. Residues Gln169–Asp177 lie on the Extracellular side of the membrane. The chain crosses the membrane as a helical span at residues Val178–Gly198. Residues Tyr199 to Lys200 lie on the Cytoplasmic side of the membrane. Residues Val201 to Leu221 form a helical membrane-spanning segment. Residues Gly222–Gly243 lie on the Extracellular side of the membrane. Residues Ser244–Ala264 traverse the membrane as a helical segment. The Cytoplasmic segment spans residues Asp265–Lys278. The helical transmembrane segment at Ile279–Val299 threads the bilayer. Over Ala300–Gly323 the chain is Extracellular. A helical transmembrane segment spans residues Leu324–Ala344. At Leu345–Arg374 the chain is on the cytoplasmic side. Residues Phe375–His395 form a helical membrane-spanning segment. Residues Phe396 to Met404 are Extracellular-facing. Residues Asn405 to Phe425 traverse the membrane as a helical segment. The Cytoplasmic segment spans residues Lys426–Lys442. A helical membrane pass occupies residues Leu443–Gly463. At Met464–Ala477 the chain is on the extracellular side. A helical membrane pass occupies residues Ala478 to Leu498. At Arg499 to Arg508 the chain is on the cytoplasmic side.

The protein belongs to the purine-cytosine permease (2.A.39) family.

The protein resides in the cell membrane. Its function is as follows. This permease has a broad specificity towards purines, and also transports cytosine, but neither uracil nor thymine. Contributes very little in purine uptake. Its major role may be the uptake of cytosine. This Emericella nidulans (strain FGSC A4 / ATCC 38163 / CBS 112.46 / NRRL 194 / M139) (Aspergillus nidulans) protein is Purine-cytosine permease fcyB (fcyB).